We begin with the raw amino-acid sequence, 399 residues long: Protein TWIN LOV 1 (399 aa).

Positions 26–97 (LWIKEALEEL…MEIREAIREE (72 aa)) constitute a PAS 1 domain. Positions 98–153 (RSVQVSLLNYRKSGSPFWMLFHMCPVFGKDDGKVTNFVAVQVPISGREHHRKKLRN) constitute a PAC 1 domain. In terms of domain architecture, PAS 2 spans 249–320 (SLVISLGRIK…EMKECILKGQ (72 aa)). C296 carries the post-translational modification S-4a-FMN cysteine. In terms of domain architecture, PAC 2 spans 320 to 376 (QSCTVQILNYSNRKDKSSFWNLLHISPVRNASGKTAYFVGVQVEASCRNTEIKELRP).

In terms of assembly, interacts with VTC2, VTC5 and BLH10. FMN binds covalently to cysteine after exposure to blue light and is reversed in the dark.

In Arabidopsis thaliana (Mouse-ear cress), this protein is Protein TWIN LOV 1 (TLP1).